The following is an 875-amino-acid chain: Alanine--tRNA ligase (875 aa).

The Zn(2+) site is built by His-596, His-600, Cys-700, and His-704.

The protein belongs to the class-II aminoacyl-tRNA synthetase family. Requires Zn(2+) as cofactor.

The protein localises to the cytoplasm. It catalyses the reaction tRNA(Ala) + L-alanine + ATP = L-alanyl-tRNA(Ala) + AMP + diphosphate. Catalyzes the attachment of alanine to tRNA(Ala) in a two-step reaction: alanine is first activated by ATP to form Ala-AMP and then transferred to the acceptor end of tRNA(Ala). Also edits incorrectly charged Ser-tRNA(Ala) and Gly-tRNA(Ala) via its editing domain. This is Alanine--tRNA ligase from Methanocella arvoryzae (strain DSM 22066 / NBRC 105507 / MRE50).